The primary structure comprises 179 residues: Large ribosomal subunit protein uL6 (179 aa).

Belongs to the universal ribosomal protein uL6 family. Part of the 50S ribosomal subunit.

This protein binds to the 23S rRNA, and is important in its secondary structure. It is located near the subunit interface in the base of the L7/L12 stalk, and near the tRNA binding site of the peptidyltransferase center. The protein is Large ribosomal subunit protein uL6 of Acaryochloris marina (strain MBIC 11017).